Here is a 414-residue protein sequence, read N- to C-terminus: MAGMAPEGSQFDAKHYDSKMQELLNQGETEEFFTSYDEVHESFDDMGLQENLLRGIYAYGFEKPSAIQQRGIVPFCKGLDVIQQAQSGTGKTATFCSGILQQLDYAVVECQALVLAPTRELAQQIEKVMRALGDYLGVKVHACVGGTSVREDQRILASGVHVVVGTPGRVFDMLRRQSLRPDYIKMFVLDEADEMLSRGFKDQIYDIFQLLPSKIQVGVFSATMPPEALEITRKFMNKPVRILVKRDELTLEGIKQFYVNVEKEEWKLDTLCDLYETLAITQSVIFVNTRRKVDWLTDKMRGRDHTVSATHGDMDQNTRDIIMREFRSGSSRVLITTDLLARGIDVQQVSLVINYDLPTQPENYLHRIGRSGRFGRKGVAINFVTRDDERMLFDIQRFYNVVIEELPANVADLL.

Positions 41–69 (ESFDDMGLQENLLRGIYAYGFEKPSAIQQ) match the Q motif motif. The 171-residue stretch at 72-242 (IVPFCKGLDV…RKFMNKPVRI (171 aa)) folds into the Helicase ATP-binding domain. ATP is bound at residue 85–92 (AQSGTGKT). The DEAD box signature appears at 190–193 (DEAD). The region spanning 253–414 (GIKQFYVNVE…ELPANVADLL (162 aa)) is the Helicase C-terminal domain.

This sequence belongs to the DEAD box helicase family. eIF4A subfamily. In terms of assembly, eIF4F is a multi-subunit complex, the composition of which varies with external and internal environmental conditions. It is composed of at least EIF4A, EIF4E and EIF4G.

The catalysed reaction is ATP + H2O = ADP + phosphate + H(+). Its function is as follows. ATP-dependent RNA helicase which is a subunit of the eIF4F complex involved in cap recognition and is required for mRNA binding to ribosome. In the current model of translation initiation, eIF4A unwinds RNA secondary structures in the 5'-UTR of mRNAs which is necessary to allow efficient binding of the small ribosomal subunit, and subsequent scanning for the initiator codon. The protein is Eukaryotic initiation factor 4A-1 of Oryza sativa subsp. japonica (Rice).